The primary structure comprises 510 residues: Pentatricopeptide repeat-containing protein At1g71060, mitochondrial (510 aa).

Residues 1 to 14 constitute a mitochondrion transit peptide; it reads MVFSRFFRVTGVNL. PPR repeat units lie at residues 127-157, 161-195, 196-230, 231-265, 266-300, 301-335, 336-370, 371-401, 403-437, and 438-472; these read TTSN…MKAK, SKET…GFKM, ESSD…RFEP, DIKS…GFEP, DVVA…NCKP, SPHI…GFPL, EAPT…GVGP, NART…MSCE, TVST…GVLP, and GMHM…GIRP.

This sequence belongs to the PPR family. P subfamily.

The protein resides in the mitochondrion. The sequence is that of Pentatricopeptide repeat-containing protein At1g71060, mitochondrial from Arabidopsis thaliana (Mouse-ear cress).